The sequence spans 171 residues: Putative defense protein (171 aa).

A signal peptide spans 1-23; sequence MKVYACLCAAVVMLVMTSRVSEA. The 148-residue stretch at 24–171 folds into the Reelin domain; sequence RSTGAPLSAC…VQSAPIKIVS (148 aa). Residues Cys33 and Cys110 are joined by a disulfide bond. Residue Asn41 is glycosylated (N-linked (GlcNAc...) asparagine).

It belongs to the insect defense protein family.

The protein resides in the secreted. In terms of biological role, may have antimicrobial activity. The sequence is that of Putative defense protein from Bombyx mori (Silk moth).